A 289-amino-acid chain; its full sequence is Protease HtpX homolog (289 aa).

The next 2 helical transmembrane spans lie at 5–27 (LWVRTGLLMAFLTGLLVGIGYLI) and 40–60 (ALFMNFFSYWFSDSIVLSWYN). Zn(2+) is bound at residue H133. E134 is a catalytic residue. H137 provides a ligand contact to Zn(2+). 2 helical membrane-spanning segments follow: residues 143-163 (TLIQTIAAVLAGAIMVLVNFA) and 181-201 (IVALILAIILAPIAATLIQLA). Position 207 (E207) interacts with Zn(2+).

The protein belongs to the peptidase M48B family. Requires Zn(2+) as cofactor.

Its subcellular location is the cell membrane. The sequence is that of Protease HtpX homolog from Pyrococcus furiosus (strain ATCC 43587 / DSM 3638 / JCM 8422 / Vc1).